The primary structure comprises 111 residues: Phosphoribosyl-ATP pyrophosphatase (111 aa).

The protein belongs to the PRA-PH family.

The protein resides in the cytoplasm. The enzyme catalyses 1-(5-phospho-beta-D-ribosyl)-ATP + H2O = 1-(5-phospho-beta-D-ribosyl)-5'-AMP + diphosphate + H(+). The protein operates within amino-acid biosynthesis; L-histidine biosynthesis; L-histidine from 5-phospho-alpha-D-ribose 1-diphosphate: step 2/9. The polypeptide is Phosphoribosyl-ATP pyrophosphatase (hisE) (Azospirillum brasilense).